A 195-amino-acid polypeptide reads, in one-letter code: Large ribosomal subunit protein uL18 (195 aa).

Belongs to the universal ribosomal protein uL18 family. Part of the 50S ribosomal subunit. Contacts the 5S and 23S rRNAs.

This is one of the proteins that bind and probably mediate the attachment of the 5S RNA into the large ribosomal subunit, where it forms part of the central protuberance. This Nanoarchaeum equitans (strain Kin4-M) protein is Large ribosomal subunit protein uL18.